The primary structure comprises 576 residues: Vesicular glutamate transporter 1 (576 aa).

The Cytoplasmic segment spans residues 1–63 (MEFRKEEFKK…CTCFGLPRRY (63 aa)). Residues 64–84 (IIAIMSGLGFCISFGIRCNLG) traverse the membrane as a helical segment. Over 85 to 116 (VAIVSMVNNNTVYKGNKIVIEQAQFTWDPETV) the chain is Vesicular. N93 carries N-linked (GlcNAc...) asparagine glycosylation. A helical transmembrane segment spans residues 117–137 (GMIHGSFFWGYIVTQIPGGYI). At 138–140 (CQK) the chain is on the cytoplasmic side. Residues 141 to 161 (FAANRVFGFAIVATSTLNMLI) form a helical membrane-spanning segment. The Vesicular portion of the chain corresponds to 162-168 (PSAARVH). A helical membrane pass occupies residues 169–189 (FACVICVRILQGLVEGVTYPA). Residues 190 to 208 (CHGIWSKWAPPLERSRLAT) are Cytoplasmic-facing. A helical transmembrane segment spans residues 209-229 (TAFCGSYAGAVVAMPLAGVLV). The Vesicular portion of the chain corresponds to 230-236 (QYSGWSS). The chain crosses the membrane as a helical span at residues 237–257 (VFYVYGSFGIMWYMFWILVSY). The Cytoplasmic segment spans residues 258-302 (ESPAIHPTISEEEKKYIEESIGESTGLMNPMAKFKAPWRKFFTSM). A helical membrane pass occupies residues 303 to 323 (PVYAIIVANFCRSWTFYLLLI). The Vesicular segment spans residues 324–341 (SQPAYFEEVFGFEISKVG). Residues 342–362 (LLSALPHLVMTIIVPIGGQIA) form a helical membrane-spanning segment. The Cytoplasmic portion of the chain corresponds to 363 to 378 (DFLRTKRIMSTTNVRK). The helical transmembrane segment at 379-399 (MMNCGGFGMEATLLLVVGYSH) threads the bilayer. Over 400–401 (SR) the chain is Vesicular. A helical membrane pass occupies residues 402-422 (GVAISFLVLAVGFSGFAISGF). Residues 423–435 (NVNHLDIAPRYAS) are Cytoplasmic-facing. The chain crosses the membrane as a helical span at residues 436-456 (ILMGISNGVGTLSGMVCPLIV). The Vesicular segment spans residues 457–469 (GAMTKHKTREEWQ). A helical transmembrane segment spans residues 470–490 (YVFLIASLVHYGGVLFYGIFA). The Cytoplasmic segment spans residues 491-576 (SGEKQPWAEP…YGTVAERDLS (86 aa)). The interval 517 to 547 (ADESEEQSQAYGAYGSYGATQTTSQQNGGWT) is disordered. Residues 534–545 (GATQTTSQQNGG) show a composition bias toward polar residues.

Belongs to the major facilitator superfamily. Sodium/anion cotransporter family. VGLUT subfamily.

Its subcellular location is the cytoplasmic vesicle. The protein resides in the secretory vesicle. It localises to the synaptic vesicle membrane. It is found in the cell membrane. The protein localises to the synapse. Its subcellular location is the synaptosome. The enzyme catalyses L-glutamate(out) = L-glutamate(in). It catalyses the reaction chloride(in) = chloride(out). The catalysed reaction is 3 Na(+)(out) + phosphate(out) = 3 Na(+)(in) + phosphate(in). It carries out the reaction phosphate(in) = phosphate(out). The enzyme catalyses K(+)(in) + H(+)(out) = K(+)(out) + H(+)(in). Chloride channel activity is allosterically activated by lumenal H(+) and Cl(-) leading to synaptic vesicles acidification. The L-glutamate transport activity is allosterically activated by lumenal H(+) and Cl(-). The allosteric activation by H(+) efficiently prevents non-vesicular efflux across the plasma membrane, thereby restricting L-glutamate transport activity to acidic membranes such as synaptic vesicles. Multifunctional transporter that transports L-glutamate as well as multiple ions such as chloride, proton, potassium, sodium and phosphate. At the synaptic vesicle membrane, mainly functions as an uniporter which transports preferentially L-glutamate but also phosphate from the cytoplasm into synaptic vesicles at presynaptic nerve terminals of excitatory neural cells. The L-glutamate or phosphate uniporter activity is electrogenic and is driven by the proton electrochemical gradient, mainly by the electrical gradient established by the vacuolar H(+)-ATPase across the synaptic vesicle membrane. In addition, functions as a chloride channel that allows a chloride permeation through the synaptic vesicle membrane that affects the proton electrochemical gradient and promotes synaptic vesicles acidification. Moreover, may function as a K(+)/H(+) antiport allowing to maintain the electrical gradient and to decrease chemical gradient and therefore sustain vesicular glutamate uptake. The vesicular K(+)/H(+) antiport activity is electroneutral. At the plasma membrane, following exocytosis, functions as a symporter of Na(+) and phosphate from the extracellular space to the cytoplasm allowing synaptic phosphate homeostasis regulation. The symporter activity is driven by an inside negative membrane potential and is electrogenic. Is necessary for synaptic signaling of visual-evoked responses from photoreceptors. This is Vesicular glutamate transporter 1 from Xenopus tropicalis (Western clawed frog).